The sequence spans 53 residues: Membrane antigen containing repeating peptides (53 aa).

6 tandem repeats follow at residues 1–10, 11–20, 21–30, 31–40, 41–50, and 51–53. A 6 X 10 AA tandem repeats region spans residues 1-53; sequence EAEEAARLQAEAEEAARQQAEAEEAARLQAEAEEAARLQAEAEEAARLQAEAE. The disordered stretch occupies residues 1–53; sequence EAEEAARLQAEAEEAARQQAEAEEAARLQAEAEEAARLQAEAEEAARLQAEAE.

It is found in the membrane. The protein is Membrane antigen containing repeating peptides of Leishmania major.